The primary structure comprises 162 residues: Ribosome maturation factor RimM (162 aa).

The PRC barrel domain maps to 90 to 161; that stretch reads EDCYYEADIV…KIIIKPLEVW (72 aa).

It belongs to the RimM family. As to quaternary structure, binds ribosomal protein uS19.

It is found in the cytoplasm. Its function is as follows. An accessory protein needed during the final step in the assembly of 30S ribosomal subunit, possibly for assembly of the head region. Essential for efficient processing of 16S rRNA. May be needed both before and after RbfA during the maturation of 16S rRNA. It has affinity for free ribosomal 30S subunits but not for 70S ribosomes. The sequence is that of Ribosome maturation factor RimM from Clostridium novyi (strain NT).